The chain runs to 253 residues: tRNA 2'-phosphotransferase 1 (253 aa).

Met-1 carries the N-acetylmethionine modification. Disordered regions lie at residues 1–29 (MNFS…DRDV) and 225–253 (KPLS…RIQQ). Position 240 is a phosphoserine (Ser-240). Positions 243–253 (HSSRERRRIQQ) are enriched in basic residues.

Belongs to the KptA/TPT1 family. In terms of tissue distribution, widely expressed. Weakly or not expressed in lung, spleen, small intestine and peripheral blood leukocytes.

The enzyme catalyses 2'-phospho-[ligated tRNA] + NAD(+) = mature tRNA + ADP-alpha-D-ribose 1'',2''-cyclic phosphate + nicotinamide. Its function is as follows. Catalyzes the last step of tRNA splicing, the transfer of the splice junction 2'-phosphate from ligated tRNA to NAD to produce ADP-ribose 1''-2'' cyclic phosphate. The protein is tRNA 2'-phosphotransferase 1 (TRPT1) of Homo sapiens (Human).